A 245-amino-acid polypeptide reads, in one-letter code: Photosystem II protein PSBS1 (245 aa).

A chloroplast-targeting transit peptide spans 1–25; that stretch reads MAMTLSTKAFAQRGVSARKNTVRVY. 4 consecutive transmembrane segments (helical) span residues 72-92, 108-128, 185-205, and 217-237; these read LFVG…EILT, GIEV…AAVL, LGFA…LAQF, and EFGL…EGSG.

It belongs to the ELIP/psbS family.

The protein resides in the plastid. It localises to the chloroplast thylakoid membrane. Required for non-photochemical quenching (NPQ), a mechanism that converts and dissipates the harmful excess absorbed light energy into heat and protect the photosynthetic apparatus from photo-oxidative damage. Seems involved in the activation of NPQ, possibly by promoting conformational changes required for activation of LHCSR3-dependent quenching in the antenna of photosystem II (PSII). The polypeptide is Photosystem II protein PSBS1 (Chlamydomonas reinhardtii (Chlamydomonas smithii)).